A 213-amino-acid polypeptide reads, in one-letter code: Small ribosomal subunit protein uS3 (213 aa).

Positions 38-106 constitute a KH type-2 domain; the sequence is IREYLENRLS…RVHINIVEIK (69 aa).

The protein belongs to the universal ribosomal protein uS3 family. In terms of assembly, part of the 30S ribosomal subunit. Forms a tight complex with proteins S10 and S14.

Its function is as follows. Binds the lower part of the 30S subunit head. Binds mRNA in the 70S ribosome, positioning it for translation. In Oceanobacillus iheyensis (strain DSM 14371 / CIP 107618 / JCM 11309 / KCTC 3954 / HTE831), this protein is Small ribosomal subunit protein uS3.